A 143-amino-acid polypeptide reads, in one-letter code: SLAPGDKTVVKKFWEKVGGQADEIGGEALSRMIAVYPPTRIYFSHWPDLAPGSPSVKKHGKKIIMKAVSDSVGKMDNLVGGLSALSDLHATRLHIDPSNFKILSHNILVTLAAHFPSDFTAEVHVAMDKFLSAVCAALSDKYR.

The residue at position 1 (Ser1) is an N-acetylserine. The region spanning 1-143 (SLAPGDKTVV…VCAALSDKYR (143 aa)) is the Globin domain. His59 provides a ligand contact to O2. Position 89 (His89) interacts with heme b.

Belongs to the globin family. In terms of assembly, heterotetramer of two alpha chains and two beta chains. In terms of tissue distribution, red blood cells.

Its function is as follows. Involved in oxygen transport from gills to the various peripheral tissues. The chain is Hemoglobin cathodic subunit alpha from Gymnothorax unicolor (Brown moray).